The following is a 123-amino-acid chain: Large ribosomal subunit protein uL14c (123 aa).

Belongs to the universal ribosomal protein uL14 family. Part of the 50S ribosomal subunit.

Its subcellular location is the plastid. It is found in the chloroplast. Its function is as follows. Binds to 23S rRNA. The polypeptide is Large ribosomal subunit protein uL14c (Oryza nivara (Indian wild rice)).